Consider the following 411-residue polypeptide: DNA polymerase IV (411 aa).

Positions 18–211 constitute a UmuC domain; the sequence is VVHVDMDCFY…LDVADLHGVG (194 aa). Residues aspartate 22 and aspartate 130 each contribute to the Mg(2+) site. Glutamate 131 is a catalytic residue. Disordered stretches follow at residues 248-280 and 376-411; these read FHRRARGADSRPVEPRGKPKSLSRESSFDGATE and GFSGDETGDGGGHEGGACGGAGRGSCGGQTTLDEFT. Positions 253–274 are enriched in basic and acidic residues; the sequence is RGADSRPVEPRGKPKSLSRESS. Positions 384-402 are enriched in gly residues; the sequence is DGGGHEGGACGGAGRGSCG.

Belongs to the DNA polymerase type-Y family. In terms of assembly, monomer. Requires Mg(2+) as cofactor.

Its subcellular location is the cytoplasm. The enzyme catalyses DNA(n) + a 2'-deoxyribonucleoside 5'-triphosphate = DNA(n+1) + diphosphate. In terms of biological role, poorly processive, error-prone DNA polymerase involved in untargeted mutagenesis. Copies undamaged DNA at stalled replication forks, which arise in vivo from mismatched or misaligned primer ends. These misaligned primers can be extended by PolIV. Exhibits no 3'-5' exonuclease (proofreading) activity. May be involved in translesional synthesis. This is DNA polymerase IV from Halobacterium salinarum (strain ATCC 29341 / DSM 671 / R1).